The sequence spans 171 residues: Adenine phosphoribosyltransferase (171 aa).

Belongs to the purine/pyrimidine phosphoribosyltransferase family. As to quaternary structure, homodimer.

It is found in the cytoplasm. The enzyme catalyses AMP + diphosphate = 5-phospho-alpha-D-ribose 1-diphosphate + adenine. The protein operates within purine metabolism; AMP biosynthesis via salvage pathway; AMP from adenine: step 1/1. Its function is as follows. Catalyzes a salvage reaction resulting in the formation of AMP, that is energically less costly than de novo synthesis. In Methylococcus capsulatus (strain ATCC 33009 / NCIMB 11132 / Bath), this protein is Adenine phosphoribosyltransferase.